The chain runs to 351 residues: tRNA pseudouridine synthase D (351 aa).

The Nucleophile role is filled by Asp-96. The TRUD domain maps to 174–304 (GAPNYFGPQR…MKPERRPLVA (131 aa)). Positions 244–268 (VLPGEPEPSGAGPTGPLWGDGGTLA) are disordered.

The protein belongs to the pseudouridine synthase TruD family.

It catalyses the reaction uridine(13) in tRNA = pseudouridine(13) in tRNA. Functionally, responsible for synthesis of pseudouridine from uracil-13 in transfer RNAs. This Marinobacter nauticus (strain ATCC 700491 / DSM 11845 / VT8) (Marinobacter aquaeolei) protein is tRNA pseudouridine synthase D.